A 677-amino-acid polypeptide reads, in one-letter code: Mitochondrial 15S rRNA processing factor ppr3 (677 aa).

The N-terminal 43 residues, 1–43 (MFTEICGKLRTCIYKKVAFSRPLGCNLRQLPVFRDFHNSVSCL), are a transit peptide targeting the mitochondrion. 6 PPR repeats span residues 210 to 244 (SVYLLNILLHASAKHSTLEETLNVYNAYNQFQLKP), 245 to 279 (DNYTFVSLIIAYSLHKQIVKAFSLLSEMKRLKIEA), 280 to 314 (NTHVFNTYIAILYHERLYEQAWRLFDYMKFKSLQS), 317 to 351 (DDKTYSYMISVCTAERKVEKALNLYQEMQERPINP), 355 to 390 (SSRTIDAILRALARYPRYHSKFWSIFEELRAEQWKP), and 569 to 604 (DIHVYACAINGASVSNDFAFGYAVWLEYLHCKSYLP).

It belongs to the CCM1 family. As to quaternary structure, binds to mitochondrial small subunit 15S rRNA.

It is found in the mitochondrion. In terms of biological role, regulates mitochondrial small subunit maturation by controlling 15S rRNA 5'-end processing. Localizes to the 5' precursor of the 15S rRNA in a position that is subsequently occupied by mS47 in the mature yeast mtSSU. Uses structure and sequence-specific RNA recognition, binding to a single-stranded region of the precursor and specifically recognizing bases -6 to -1. The exchange of Ccm1 for mS47 is coupled to the irreversible removal of precursor rRNA that is accompanied by conformational changes of the mitoribosomal proteins uS5m and mS26. These conformational changes signal completion of 5'-end rRNA processing through protection of the mature 5'-end of the 15S rRNA and stabilization of mS47. The removal of the 5' precursor together with the dissociation of Ccm1 may be catalyzed by the 5'-3' exoribonuclease Pet127. Involved in the specific removal of group I introns in mitochondrial encoded transcripts. The sequence is that of Mitochondrial 15S rRNA processing factor ppr3 (dmr1) from Schizosaccharomyces japonicus (strain yFS275 / FY16936) (Fission yeast).